The following is an 865-amino-acid chain: Catenin alpha-2 (865 aa).

Positions 823–839 (PEKKPLVKREKPEECQT) are enriched in basic and acidic residues. The disordered stretch occupies residues 823 to 851 (PEKKPLVKREKPEECQTRVRRGSQKKHIS). The span at 840–850 (RVRRGSQKKHI) shows a compositional bias: basic residues.

This sequence belongs to the vinculin/alpha-catenin family.

It is found in the cell membrane. Its subcellular location is the cytoplasm. The protein localises to the cytoskeleton. The protein resides in the cell junction. It localises to the adherens junction. It is found in the cell projection. Its subcellular location is the axon. The protein localises to the nucleus. In terms of biological role, may function as a linker between cadherin adhesion receptors and the cytoskeleton to regulate cell-cell adhesion and differentiation in the nervous system. This Danio rerio (Zebrafish) protein is Catenin alpha-2 (Ctnna2).